A 387-amino-acid chain; its full sequence is Pepsin A-5 (387 aa).

The first 15 residues, 1-15 (MKWLWVLGLVALSEC), serve as a signal peptide directing secretion. Residues 16 to 62 (LVKIPLMKIKSMRENLRESQVLKDYLEKYPRSRAHVLLEQRRNPAVT) constitute a propeptide, activation peptide. In terms of domain architecture, Peptidase A1 spans 74–384 (YIGIISIGTP…DRANNRIGLA (311 aa)). D92 is an active-site residue. 2 disulfide bridges follow: C105–C110 and C266–C270. Residue D275 is part of the active site. C309 and C343 form a disulfide bridge.

The protein belongs to the peptidase A1 family. As to expression, expressed in glandular chief cells of the neonatal stomach. Expressed in yolk sacs of the placenta (at protein level).

It is found in the secreted. It carries out the reaction Preferential cleavage: hydrophobic, preferably aromatic, residues in P1 and P1' positions. Cleaves 1-Phe-|-Val-2, 4-Gln-|-His-5, 13-Glu-|-Ala-14, 14-Ala-|-Leu-15, 15-Leu-|-Tyr-16, 16-Tyr-|-Leu-17, 23-Gly-|-Phe-24, 24-Phe-|-Phe-25 and 25-Phe-|-Tyr-26 bonds in the B chain of insulin.. Its activity is regulated as follows. Inhibited by pepstatin A. Shows particularly broad specificity; although bonds involving phenylalanine and leucine are preferred, many others are also cleaved to some extent. May play a role as a specialized neonatal digestive enzyme. This is Pepsin A-5 from Mus musculus (Mouse).